The primary structure comprises 87 residues: Protein anon-73B1 (87 aa).

The helical transmembrane segment at L25–L47 threads the bilayer. A disordered region spans residues N50–R87. Residues V63 to R72 are compositionally biased toward basic and acidic residues. A compositionally biased stretch (basic residues) spans T73–R87.

It belongs to the UPF0239 family.

It is found in the membrane. In Drosophila simulans (Fruit fly), this protein is Protein anon-73B1 (anon-73B1).